An 821-amino-acid chain; its full sequence is Bifunctional dethiobiotin synthetase/7,8-diamino-pelargonic acid aminotransferase, mitochondrial (821 aa).

Positions 28 to 283 are dethiobiotin synthetase; it reads SPAFAVFGAN…VHVLPPIPED (256 aa). Position 39–44 (39–44) interacts with ATP; that stretch reads GVGKTL. Threonine 43 provides a ligand contact to Mg(2+). Residue threonine 72 coordinates substrate. A Mg(2+)-binding site is contributed by glutamate 194. 194-197 contacts ATP; sequence ETAG. Residues 316–820 form a 7,8-diamino-pelargonic acid aminotransferase region; that stretch reads RLNSMQRKSK…AKVHRRLQKL (505 aa). 374–375 serves as a coordination point for (8S)-8-amino-7-oxononanoate; that stretch reads WW. 436–437 provides a ligand contact to pyridoxal 5'-phosphate; sequence GS. Position 482 (tyrosine 482) interacts with (8S)-8-amino-7-oxononanoate. Aspartate 626 contributes to the pyridoxal 5'-phosphate binding site. (8S)-8-amino-7-oxononanoate-binding residues include lysine 655 and glycine 689. Residue lysine 655 is modified to N6-(pyridoxal phosphate)lysine. Pyridoxal 5'-phosphate is bound at residue serine 691. Arginine 787 contacts (8S)-8-amino-7-oxononanoate.

In the N-terminal section; belongs to the dethiobiotin synthetase family. It in the C-terminal section; belongs to the class-III pyridoxal-phosphate-dependent aminotransferase family. BioA subfamily. Mg(2+) is required as a cofactor. Pyridoxal 5'-phosphate serves as cofactor.

The protein resides in the mitochondrion. The catalysed reaction is (7R,8S)-7,8-diammoniononanoate + CO2 + ATP = (4R,5S)-dethiobiotin + ADP + phosphate + 3 H(+). It catalyses the reaction (8S)-8-amino-7-oxononanoate + S-adenosyl-L-methionine = S-adenosyl-4-methylsulfanyl-2-oxobutanoate + (7R,8S)-7,8-diammoniononanoate. It functions in the pathway cofactor biosynthesis; biotin biosynthesis; biotin from 7,8-diaminononanoate: step 1/2. The protein operates within cofactor biosynthesis; biotin biosynthesis; 7,8-diaminononanoate from 8-amino-7-oxononanoate (SAM route): step 1/1. Bifunctional enzyme that catalyzes two different reactions involved in the biotin biosynthesis. In terms of biological role, catalyzes a mechanistically unusual reaction, the ATP-dependent insertion of CO2 between the N7 and N8 nitrogen atoms of 7,8-diaminopelargonic acid (DAPA) to form an ureido ring. Functionally, catalyzes the transfer of the alpha-amino group from S-adenosyl-L-methionine (SAM) to 7-keto-8-aminopelargonic acid (KAPA) to form 7,8-diaminopelargonic acid (DAPA). It is the only aminotransferase known to utilize SAM as an amino donor. This Oryza sativa subsp. japonica (Rice) protein is Bifunctional dethiobiotin synthetase/7,8-diamino-pelargonic acid aminotransferase, mitochondrial (BIO3-BIO1).